The chain runs to 195 residues: Apoptosis-associated speck-like protein containing a CARD (195 aa).

The Pyrin domain maps to 1–91; that stretch reads MGRARDAILD…AGQLQAATHQ (91 aa). Residues Lys-55 and Lys-174 each participate in a glycyl lysine isopeptide (Lys-Gly) (interchain with G-Cter in ubiquitin) cross-link. The CARD domain occupies 107–195; it reads AAKPGLHFID…SYLVEDLERS (89 aa). Residue Ser-195 is modified to Phosphoserine.

As to quaternary structure, self-associates; enforced oligomerization induces apoptosis, NF-kappa-B regulation and interleukin-1 beta secretion. Homooligomers can form disk-like particles of approximately 12 nm diameter and approximately 1 nm height. Next to isoform 1, also isoform 2 and isoform 3 may be involved in oligomerization leading to functional regulation. Component of several inflammasomes containing one pattern recognition receptor/sensor, such as NLRP1, NLRP2, NLRP3, NLRP6, NLRC4, AIM2, MEFV or NOD2, and probably NLRC4, NLRP12 or IFI16. Major component of the ASC pyroptosome, a 1-2 um supramolecular assembly (one per macrophage cell) which consists of oligomerized PYCARD dimers and CASP1. Interacts with CASP1 (precursor form); the interaction induces activation of CASP1 leading to the processing of interleukin-1 beta; PYCARD competes with RIPK2 for binding to CASP1. Interacts with NLRP3; the interaction requires the homooligomerization of NLRP3. Interacts with NLRP2, NLRC4, MEFV, CARD16, AIM2, IFI16, NOD2, RIGI, RIPK2, PYDC1, PYDC2, NLRP10, CASP8, CHUK, IKBKB and BAX. Component of the AIM2 PANoptosome complex, a multiprotein complex that drives inflammatory cell death (PANoptosis). Post-translationally, phosphorylated. 'Lys-63'-linked polyubiquitination by TRAF3 is critical for speck formation and inflammasome activation. 'Lys-63'-linked deubiquitinated by USP50; a crucial step for NLRP3-mediated inflammasome activation. 'Lys-63'-linked polyubiquitination by PELI1 is also critical for speck formation and inflammasome activation. Deubiquitinated by USP3 that cleaves 'Lys-48'-linked ubiquitin chains and strengthens its stability by blocking proteasomal degradation. As to expression, widely expressed at low levels. Detected in peripheral blood leukocytes, lung, small intestine, spleen, thymus, colon and at lower levels in placenta, liver and kidney. Very low expression in skeletal muscle, heart and brain. Expressed in lung epithelial cells (at protein level). Detected in the leukemia cell lines HL-60 and U-937, but not in Jurkat T-cell lymphoma and Daudi Burkitt's lymphoma. Detected in the melanoma cell line WM35, but not in WM793. Not detected in HeLa cervical carcinoma cells and MOLT-4 lymphocytic leukemia cells.

The protein resides in the cytoplasm. It is found in the inflammasome. It localises to the endoplasmic reticulum. The protein localises to the mitochondrion. Its subcellular location is the nucleus. The protein resides in the golgi apparatus membrane. Functions as a key mediator in apoptosis and inflammation. Promotes caspase-mediated apoptosis involving predominantly caspase-8 and also caspase-9 in a probable cell type-specific manner. Involved in activation of the mitochondrial apoptotic pathway, promotes caspase-8-dependent proteolytic maturation of BID independently of FADD in certain cell types and also mediates mitochondrial translocation of BAX and activates BAX-dependent apoptosis coupled to activation of caspase-9, -2 and -3. Involved in innate immune response by acting as an integral adapter in the assembly of various inflammasomes (NLRP1, NLRP2, NLRP3, NLRP6, AIM2 and probably IFI16) which recruit and activate caspase-1 leading to processing and secretion of pro-inflammatory cytokines. Caspase-1-dependent inflammation leads to macrophage pyroptosis, a form of cell death. The function as activating adapter in different types of inflammasomes is mediated by the pyrin and CARD domains and their homotypic interactions. Clustered PYCARD nucleates the formation of caspase-1 filaments through the interaction of their respective CARD domains, acting as a platform for of caspase-1 polymerization. In the NLRP1 and NLRC4 inflammasomes seems not be required but facilitates the processing of procaspase-1. In cooperation with NOD2 involved in an inflammasome activated by bacterial muramyl dipeptide leading to caspase-1 activation. May be involved in RIGI-triggered pro-inflammatory responses and inflammasome activation. In collaboration with AIM2 which detects cytosolic double-stranded DNA may also be involved in a caspase-1-independent cell death that involves caspase-8. In adaptive immunity may be involved in maturation of dendritic cells to stimulate T-cell immunity and in cytoskeletal rearrangements coupled to chemotaxis and antigen uptake may be involved in post-transcriptional regulation of the guanine nucleotide exchange factor DOCK2; the latter function is proposed to involve the nuclear form. Also involved in transcriptional activation of cytokines and chemokines independent of the inflammasome; this function may involve AP-1, NF-kappa-B, MAPK and caspase-8 signaling pathways. For regulation of NF-kappa-B activating and inhibiting functions have been reported. Modulates NF-kappa-B induction at the level of the IKK complex by inhibiting kinase activity of CHUK and IKBK. Proposed to compete with RIPK2 for association with CASP1 thereby down-regulating CASP1-mediated RIPK2-dependent NF-kappa-B activation and activating interleukin-1 beta processing. Modulates host resistance to DNA virus infection, probably by inducing the cleavage of and inactivating CGAS in presence of cytoplasmic double-stranded DNA. In terms of biological role, may have a regulating effect on the function as inflammasome adapter. Functionally, seems to inhibit inflammasome-mediated maturation of interleukin-1 beta. The chain is Apoptosis-associated speck-like protein containing a CARD from Homo sapiens (Human).